The sequence spans 104 residues: uncharacterized protein (104 aa).

In terms of assembly, homodimer.

This is an uncharacterized protein from Bacillus subtilis (strain 168).